The following is a 138-amino-acid chain: MAKTIPRIGSRKNGRIGSRKNTRRIPKGVIHVQASFNNTIVTVTDVRGRVVSWSSAGTCGFKGTRRGTPFAAQTAAGNAIRTVVDQGMQRAEVMIKGPGLGRDAALRAIRRSGILLTFVRDVTPMPHNGCRPPKKRRV.

The disordered stretch occupies residues 1-23; it reads MAKTIPRIGSRKNGRIGSRKNTR. A compositionally biased stretch (basic residues) spans 9-23; that stretch reads GSRKNGRIGSRKNTR.

This sequence belongs to the universal ribosomal protein uS11 family. Part of the 30S ribosomal subunit.

The protein resides in the plastid. The protein localises to the chloroplast. The sequence is that of Small ribosomal subunit protein uS11c from Daucus carota (Wild carrot).